Here is a 466-residue protein sequence, read N- to C-terminus: Neuronal acetylcholine receptor subunit non-alpha-3 (466 aa).

The signal sequence occupies residues 1–28 (MKLQISGLLLVTAVAYATIEAPEEFVSL). The Extracellular portion of the chain corresponds to 29-235 (AEMEDTLLRN…VTYSFILKRL (207 aa)). N-linked (GlcNAc...) asparagine glycans are attached at residues Asn-54, Asn-141, Asn-169, and Asn-208. A disulfide bond links Cys-156 and Cys-170. Helical transmembrane passes span 236 to 260 (PLFYTLFLIIPCLGLSFLTVLVFYL), 268 to 285 (LLLSTSVLVSLTVFLLVI), and 302 to 323 (YLLFIMIFVTFSIIVTLFVINV). The Cytoplasmic segment spans residues 324-438 (HHRSSATYHP…WKFVAQVLDR (115 aa)). The helical transmembrane segment at 439–456 (IFLWVFLTASVLGTILIF) threads the bilayer.

This sequence belongs to the ligand-gated ion channel (TC 1.A.9) family. Acetylcholine receptor (TC 1.A.9.1) subfamily. Neuronal AChR seems to be composed of two different type of subunits: alpha and non-alpha (beta). As to expression, retina, tectum and brain.

It is found in the postsynaptic cell membrane. The protein resides in the cell membrane. Its function is as follows. After binding acetylcholine, the AChR responds by an extensive change in conformation that affects all subunits and leads to opening of an ion-conducting channel across the plasma membrane. The chain is Neuronal acetylcholine receptor subunit non-alpha-3 from Carassius auratus (Goldfish).